A 155-amino-acid chain; its full sequence is 3-hydroxyacyl-[acyl-carrier-protein] dehydratase FabZ (155 aa).

The active site involves H54.

Belongs to the thioester dehydratase family. FabZ subfamily.

It is found in the cytoplasm. It carries out the reaction a (3R)-hydroxyacyl-[ACP] = a (2E)-enoyl-[ACP] + H2O. Its function is as follows. Involved in unsaturated fatty acids biosynthesis. Catalyzes the dehydration of short chain beta-hydroxyacyl-ACPs and long chain saturated and unsaturated beta-hydroxyacyl-ACPs. The protein is 3-hydroxyacyl-[acyl-carrier-protein] dehydratase FabZ of Burkholderia ambifaria (strain MC40-6).